The chain runs to 103 residues: Entry-fusion complex protein OPG086 (103 aa).

The helical; Signal-anchor transmembrane segment at 1–21 (MTLFLVIFFILFLLLCYFFSF) threads the bilayer. Residues 22-103 (KRTNKMEIGI…KLVPTLLLSK (82 aa)) lie on the Virion surface side of the membrane.

This sequence belongs to the orthopoxvirus OPG086 family. In terms of assembly, interacts with OPG099/L5. Component of the entry fusion complex (EFC) composed of OPG053, OPG076, OPG086, OPG094, OPG095, OPG099, OPG107, OPG143, OPG104, OPG147 and OPG155. Except for OPG095 and OPG053, each of the EFC proteins is required for assembly or stability of the complex. Unglycosylated because produced in viral factories instead of the classic ER -Golgi route.

It is found in the virion membrane. Functionally, component of the entry fusion complex (EFC), which consists of 11 proteins. During cell infection, this complex mediates entry of the virion core into the host cytoplasm by a two-step mechanism consisting of lipid mixing of the viral and cellular membranes and subsequent pore formation. The chain is Entry-fusion complex protein OPG086 (OPG086) from Vertebrata (FPV).